The primary structure comprises 776 residues: Protein translocase subunit SecA 2 (776 aa).

Residues glutamine 80, 98–102 (GEGKT), and aspartate 486 contribute to the ATP site.

It belongs to the SecA family. In terms of assembly, monomer and homodimer. Part of the essential Sec protein translocation apparatus which comprises SecA, SecYEG and auxiliary proteins SecDF. Other proteins may also be involved.

It localises to the cell membrane. The protein resides in the cytoplasm. It catalyses the reaction ATP + H2O + cellular proteinSide 1 = ADP + phosphate + cellular proteinSide 2.. Part of the Sec protein translocase complex. Interacts with the SecYEG preprotein conducting channel. Has a central role in coupling the hydrolysis of ATP to the transfer of proteins into and across the cell membrane, serving as an ATP-driven molecular motor driving the stepwise translocation of polypeptide chains across the membrane. The sequence is that of Protein translocase subunit SecA 2 from Listeria welshimeri serovar 6b (strain ATCC 35897 / DSM 20650 / CCUG 15529 / CIP 8149 / NCTC 11857 / SLCC 5334 / V8).